Here is a 53-residue protein sequence, read N- to C-terminus: Large ribosomal subunit protein bL32c (53 aa).

It belongs to the bacterial ribosomal protein bL32 family.

The protein resides in the plastid. It localises to the chloroplast. The protein is Large ribosomal subunit protein bL32c of Coffea arabica (Arabian coffee).